Consider the following 210-residue polypeptide: Sortase A (210 aa).

The Cytoplasmic segment spans residues 1–5; the sequence is MNKQR. Residues 6–26 traverse the membrane as a helical segment; sequence IYSIVAILLFVVGGVLIGKPF. Topologically, residues 27 to 210 are extracellular; sequence YDGYQAEKKQ…GDLVGTKAKK (184 aa). Catalysis depends on His126, which acts as the Proton donor/acceptor. The active-site Acyl-thioester intermediate is the Cys187.

This sequence belongs to the bacterial sortase family. Class A subfamily.

The protein resides in the cell membrane. With respect to regulation, inhibited by thiol-reactive reagents. In terms of biological role, transpeptidase that anchors surface proteins to the cell wall. Recognizes and modifies its substrate by proteolytic cleavage of a C-terminal sorting signal. Following cleavage, a covalent intermediate is formed via a thioester bond between the sortase and its substrate, which is then transferred and covalently attached to the cell wall. This sortase recognizes a Leu-Pro-x-Thr-Gly (LPXTG) motif, which is cleaved by the sortase between the threonine and glycine residues. Important for growth in macrophages. May be critical in the early stages of inhalation anthrax. This is Sortase A from Bacillus anthracis.